A 99-amino-acid polypeptide reads, in one-letter code: Large ribosomal subunit protein uL23 (99 aa).

This sequence belongs to the universal ribosomal protein uL23 family. Part of the 50S ribosomal subunit. Contacts protein L29, and trigger factor when it is bound to the ribosome.

Functionally, one of the early assembly proteins it binds 23S rRNA. One of the proteins that surrounds the polypeptide exit tunnel on the outside of the ribosome. Forms the main docking site for trigger factor binding to the ribosome. In Pseudomonas savastanoi pv. phaseolicola (strain 1448A / Race 6) (Pseudomonas syringae pv. phaseolicola (strain 1448A / Race 6)), this protein is Large ribosomal subunit protein uL23.